The sequence spans 299 residues: Phosphatidylcholine-sterol acyltransferase (299 aa).

Asn28 and Asn184 each carry an N-linked (GlcNAc...) asparagine glycan. Cys225 and Cys268 form a disulfide bridge. Asp257 (charge relay system) is an active-site residue. Residue Asn285 is glycosylated (N-linked (GlcNAc...) asparagine). His289 acts as the Charge relay system in catalysis. The N-linked (GlcNAc...) asparagine glycan is linked to Asn296.

It belongs to the AB hydrolase superfamily. Lipase family.

It localises to the secreted. The enzyme catalyses a sterol + a 1,2-diacyl-sn-glycero-3-phosphocholine = a sterol ester + a 1-acyl-sn-glycero-3-phosphocholine. Its activity is regulated as follows. APOA1 is the most potent activator in plasma. Also activated by APOE, APOC1 and APOA4. Functionally, central enzyme in the extracellular metabolism of plasma lipoproteins. Synthesized mainly in the liver and secreted into plasma where it converts cholesterol and phosphatidylcholines (lecithins) to cholesteryl esters and lysophosphatidylcholines on the surface of high and low density lipoproteins (HDLs and LDLs). The cholesterol ester is then transported back to the liver. Has a preference for plasma 16:0-18:2 or 18:O-18:2 phosphatidylcholines. Also produced in the brain by primary astrocytes, and esterifies free cholesterol on nascent APOE-containing lipoproteins secreted from glia and influences cerebral spinal fluid (CSF) APOE- and APOA1 levels. Together with APOE and the cholesterol transporter ABCA1, plays a key role in the maturation of glial-derived, nascent lipoproteins. Required for remodeling high-density lipoprotein particles into their spherical forms. This chain is Phosphatidylcholine-sterol acyltransferase (LCAT), found in Micromys minutus (European harvest mouse).